The chain runs to 793 residues: Facilitated trehalose transporter Tret1 (793 aa).

Residues 1 to 326 (MNRKVGPVLE…LEVYRPTTNP (326 aa)) lie on the Cytoplasmic side of the membrane. Disordered stretches follow at residues 99–148 (EKAK…EHKS) and 213–235 (RHIS…FEPS). Residues 104-113 (KSSLKSSRVS) are compositionally biased toward low complexity. Residues 115-125 (DQEDDRFDEDE) are compositionally biased toward acidic residues. Positions 213–223 (RHISFKFDKEP) are enriched in basic and acidic residues. Residues 327-347 (IYIWTQVLAALSVSLGSMVVG) form a helical membrane-spanning segment. At 348–376 (FSSAYTSPALVSMKDRNITSFEVTDQSGS) the chain is on the extracellular side. A glycan (N-linked (GlcNAc...) asparagine) is linked at N364. A helical transmembrane segment spans residues 377 to 397 (WVGGIMPLAGLAGGILGGPMI). The Cytoplasmic portion of the chain corresponds to 398–411 (EYLGRKNTILATAT). A helical transmembrane segment spans residues 412–432 (PFIISWLLIGCATHVAMVLVG). Topologically, residues 433-434 (RA) are extracellular. Residues 435 to 455 (LSGLCVGIASLSLPVYLGETV) traverse the membrane as a helical segment. The Cytoplasmic segment spans residues 456-460 (QPEVR). A helical membrane pass occupies residues 461 to 481 (GTLGLLPTAFGNIGILLCFVA). The Extracellular segment spans residues 482–488 (GKYLDWS). A helical transmembrane segment spans residues 489 to 509 (GLAFLGAALPIPFLLLMFLIP). Residues 510–572 (ETPRWYVSRN…DLLNKANLKP (63 aa)) lie on the Cytoplasmic side of the membrane. A helical membrane pass occupies residues 573–593 (LLISLGLMFFQQLSGINAVIF). Residues 594–609 (YTVQIFQSAGSTIDEK) lie on the Extracellular side of the membrane. Residues 610–630 (LCTIIVGVVNFIATFIATVLI) traverse the membrane as a helical segment. Over 631–636 (DRLGRK) the chain is Cytoplasmic. The helical transmembrane segment at 637–657 (ILLYISDVAMIITLMTLGTFF) threads the bilayer. The Extracellular segment spans residues 658–668 (YMKNNGDDVSE). The chain crosses the membrane as a helical span at residues 669–689 (IGWLPLAAFVVFVVGFSLGFG). At 690-703 (PIPWLMMGEILPGK) the chain is on the cytoplasmic side. The chain crosses the membrane as a helical span at residues 704 to 724 (IRGSAASVATAFNWSCTFVVT). The Extracellular portion of the chain corresponds to 725–737 (KTFADITASIGNH). A helical transmembrane segment spans residues 738-758 (GAFWMFGSICIVGLLFVIVYV). Topologically, residues 759-793 (PETQGKSLEDIERKMMGRVRRMSSVANIKPLSFNM) are cytoplasmic.

The protein belongs to the major facilitator superfamily. Sugar transporter (TC 2.A.1.1) family. Trehalose transporter subfamily.

It localises to the cell membrane. Its function is as follows. High-capacity facilitative transporter for trehalose. Does not transport maltose, sucrose or lactose. Mediates the bidirectional transfer of trehalose. Responsible for the transport of trehalose synthesized in the fat body and the incorporation of trehalose into other tissues that require a carbon source, thereby regulating trehalose levels in the hemolymph. This is Facilitated trehalose transporter Tret1 from Anopheles gambiae (African malaria mosquito).